The following is a 170-amino-acid chain: Cyclic pyranopterin monophosphate synthase (170 aa).

Substrate is bound by residues 89 to 91 (LCH) and 125 to 126 (ME). Asp-140 is a catalytic residue.

The protein belongs to the MoaC family. Homohexamer; trimer of dimers.

It catalyses the reaction (8S)-3',8-cyclo-7,8-dihydroguanosine 5'-triphosphate = cyclic pyranopterin phosphate + diphosphate. The protein operates within cofactor biosynthesis; molybdopterin biosynthesis. In terms of biological role, catalyzes the conversion of (8S)-3',8-cyclo-7,8-dihydroguanosine 5'-triphosphate to cyclic pyranopterin monophosphate (cPMP). This is Cyclic pyranopterin monophosphate synthase from Streptomyces coelicolor (strain ATCC BAA-471 / A3(2) / M145).